The chain runs to 451 residues: Methionine aminopeptidase 2-2 (451 aa).

Residues Met-1 to Pro-97 are disordered. Positions Thr-19–Pro-28 are enriched in polar residues. The span at Glu-35 to Gly-45 shows a compositional bias: acidic residues. Residues Lys-60–Ala-73 are compositionally biased toward basic residues. Residues Gly-74–Ser-83 are compositionally biased toward low complexity. Residue His-204 participates in substrate binding. Positions 224, 235, and 304 each coordinate a divalent metal cation. A substrate-binding site is contributed by His-312. A divalent metal cation-binding residues include Glu-337 and Glu-432.

The protein belongs to the peptidase M24A family. Methionine aminopeptidase eukaryotic type 2 subfamily. Co(2+) is required as a cofactor. It depends on Zn(2+) as a cofactor. The cofactor is Mn(2+). Requires Fe(2+) as cofactor.

It localises to the cytoplasm. The catalysed reaction is Release of N-terminal amino acids, preferentially methionine, from peptides and arylamides.. Functionally, cotranslationally removes the N-terminal methionine from nascent proteins. The N-terminal methionine is often cleaved when the second residue in the primary sequence is small and uncharged (Met-Ala-, Cys, Gly, Pro, Ser, Thr, or Val). The sequence is that of Methionine aminopeptidase 2-2 from Leptosphaeria maculans (strain JN3 / isolate v23.1.3 / race Av1-4-5-6-7-8) (Blackleg fungus).